A 797-amino-acid chain; its full sequence is Interphotoreceptor matrix proteoglycan 1 (797 aa).

A signal peptide spans 1–20 (MYLETRRAIFVFWIFLQVQG). N-linked (GlcNAc...) asparagine glycosylation is found at Asn42, Asn143, Asn191, and Asn215. The SEA 1 domain occupies 232–354 (EEQRVELSVS…QPEIYLTATD (123 aa)). Thr403, Thr421, Thr432, and Thr442 each carry an O-linked (GalNAc...) threonine glycan. In terms of domain architecture, SEA 2 spans 571-684 (RELVVFFSLR…YSLNIEPADQ (114 aa)). 2 N-linked (GlcNAc...) asparagine glycosylation sites follow: Asn592 and Asn616. The short motif at 621 to 629 (KQLEILNFR) is the Heparin- and hyaluronan-binding element. 2 N-linked (GlcNAc...) asparagine glycosylation sites follow: Asn630 and Asn648.

Post-translationally, the N-terminus is blocked. In terms of processing, highly glycosylated (N- and O-linked carbohydrates and sialic acid). As to expression, expressed in the retina (at protein level). In the retina, specifically expressed by cone and rod photoreceptor cells. Localizes to cone and rod photoreceptor cells surrounding the interphotoreceptor matrix of the retina.

It is found in the cell projection. It localises to the cilium. Its subcellular location is the photoreceptor outer segment. The protein localises to the secreted. The protein resides in the extracellular space. It is found in the extracellular matrix. It localises to the interphotoreceptor matrix. Its subcellular location is the photoreceptor inner segment. In terms of biological role, chondroitin sulfate-, heparin- and hyaluronan-binding protein. May serve to form a basic macromolecular scaffold comprising the insoluble interphotoreceptor matrix. This Homo sapiens (Human) protein is Interphotoreceptor matrix proteoglycan 1.